Reading from the N-terminus, the 456-residue chain is Bifunctional protein GlmU (456 aa).

Positions 1–230 (MDKRFAVVLA…FQETLGVNDR (230 aa)) are pyrophosphorylase. UDP-N-acetyl-alpha-D-glucosamine is bound by residues 9–12 (LAAG), K23, Q73, and 78–79 (GT). D103 provides a ligand contact to Mg(2+). UDP-N-acetyl-alpha-D-glucosamine-binding residues include G140, E155, N170, and N228. Mg(2+) is bound at residue N228. The linker stretch occupies residues 231-251 (VALSQAEQFMKERINKRHMQN). Residues 252–456 (GVTLIDPMNT…DDYVKNIHKK (205 aa)) form an N-acetyltransferase region. UDP-N-acetyl-alpha-D-glucosamine is bound by residues R333 and K351. H363 serves as the catalytic Proton acceptor. UDP-N-acetyl-alpha-D-glucosamine-binding residues include Y366 and N377. Residues 386–387 (NY), A423, and R440 contribute to the acetyl-CoA site.

This sequence in the N-terminal section; belongs to the N-acetylglucosamine-1-phosphate uridyltransferase family. The protein in the C-terminal section; belongs to the transferase hexapeptide repeat family. Homotrimer. Mg(2+) serves as cofactor.

The protein resides in the cytoplasm. The catalysed reaction is alpha-D-glucosamine 1-phosphate + acetyl-CoA = N-acetyl-alpha-D-glucosamine 1-phosphate + CoA + H(+). It carries out the reaction N-acetyl-alpha-D-glucosamine 1-phosphate + UTP + H(+) = UDP-N-acetyl-alpha-D-glucosamine + diphosphate. The protein operates within nucleotide-sugar biosynthesis; UDP-N-acetyl-alpha-D-glucosamine biosynthesis; N-acetyl-alpha-D-glucosamine 1-phosphate from alpha-D-glucosamine 6-phosphate (route II): step 2/2. It participates in nucleotide-sugar biosynthesis; UDP-N-acetyl-alpha-D-glucosamine biosynthesis; UDP-N-acetyl-alpha-D-glucosamine from N-acetyl-alpha-D-glucosamine 1-phosphate: step 1/1. It functions in the pathway bacterial outer membrane biogenesis; LPS lipid A biosynthesis. In terms of biological role, catalyzes the last two sequential reactions in the de novo biosynthetic pathway for UDP-N-acetylglucosamine (UDP-GlcNAc). The C-terminal domain catalyzes the transfer of acetyl group from acetyl coenzyme A to glucosamine-1-phosphate (GlcN-1-P) to produce N-acetylglucosamine-1-phosphate (GlcNAc-1-P), which is converted into UDP-GlcNAc by the transfer of uridine 5-monophosphate (from uridine 5-triphosphate), a reaction catalyzed by the N-terminal domain. The sequence is that of Bifunctional protein GlmU from Bacillus subtilis (strain 168).